Consider the following 565-residue polypeptide: NAD-dependent malic enzyme (565 aa).

Tyr-104 functions as the Proton donor in the catalytic mechanism. Arg-157 serves as a coordination point for NAD(+). The active-site Proton acceptor is the Lys-175. Glu-246, Asp-247, and Asp-270 together coordinate a divalent metal cation. NAD(+)-binding residues include Asp-270 and Asn-418.

Belongs to the malic enzymes family. In terms of assembly, homotetramer. Mg(2+) serves as cofactor. It depends on Mn(2+) as a cofactor.

It carries out the reaction (S)-malate + NAD(+) = pyruvate + CO2 + NADH. It catalyses the reaction oxaloacetate + H(+) = pyruvate + CO2. This chain is NAD-dependent malic enzyme, found in Pectobacterium atrosepticum (strain SCRI 1043 / ATCC BAA-672) (Erwinia carotovora subsp. atroseptica).